The chain runs to 951 residues: Bifunctional glutamine synthetase adenylyltransferase/adenylyl-removing enzyme (951 aa).

The tract at residues 1-445 (MSILPLPALP…VFDELIGDDA (445 aa)) is adenylyl removase. Residues 454 to 951 (HSSYSSLWQD…VSWNKWLMGA (498 aa)) form an adenylyl transferase region.

This sequence belongs to the GlnE family. Mg(2+) is required as a cofactor.

The enzyme catalyses [glutamine synthetase]-O(4)-(5'-adenylyl)-L-tyrosine + phosphate = [glutamine synthetase]-L-tyrosine + ADP. It catalyses the reaction [glutamine synthetase]-L-tyrosine + ATP = [glutamine synthetase]-O(4)-(5'-adenylyl)-L-tyrosine + diphosphate. Involved in the regulation of glutamine synthetase GlnA, a key enzyme in the process to assimilate ammonia. When cellular nitrogen levels are high, the C-terminal adenylyl transferase (AT) inactivates GlnA by covalent transfer of an adenylyl group from ATP to specific tyrosine residue of GlnA, thus reducing its activity. Conversely, when nitrogen levels are low, the N-terminal adenylyl removase (AR) activates GlnA by removing the adenylyl group by phosphorolysis, increasing its activity. The regulatory region of GlnE binds the signal transduction protein PII (GlnB) which indicates the nitrogen status of the cell. This is Bifunctional glutamine synthetase adenylyltransferase/adenylyl-removing enzyme from Pectobacterium atrosepticum (strain SCRI 1043 / ATCC BAA-672) (Erwinia carotovora subsp. atroseptica).